The chain runs to 90 residues: Toxin 3FTx-Psa1 (90 aa).

An N-terminal signal peptide occupies residues 1–21 (MKTLPLVLAVVAFVYLDLAHT). Intrachain disulfides connect Cys-24/Cys-43, Cys-36/Cys-61, Cys-65/Cys-76, and Cys-77/Cys-82.

Belongs to the three-finger toxin family. Ancestral subfamily. As to expression, expressed by the venom gland.

The protein resides in the secreted. This Psammophis mossambicus (Olive sand snake) protein is Toxin 3FTx-Psa1.